Here is a 165-residue protein sequence, read N- to C-terminus: MFKKLFGLGSKTNEETIVAPLTGAVKNIEEVPDPVFAGRMMGDGVAIDPTEGVVVSPVDGEIVQLFHTKHAIGIKAKNGTEILIHVGLETVKMEGEGFEAHVSEGQAVKAGDKLISFDLELIREKAKSTITPIVITNTDAAESIKTTVGVAATKGSTEVMKVTMK.

Residues 33–137 (DPVFAGRMMG…STITPIVITN (105 aa)) enclose the PTS EIIA type-1 domain. Residues H70 and H85 each coordinate Zn(2+). H85 functions as the Tele-phosphohistidine intermediate; for EIIA activity in the catalytic mechanism. The residue at position 85 (H85) is a Phosphohistidine; by HPr.

Heterodimer with glycerol kinase (glpk). Zn(2+) is required as a cofactor.

It localises to the cytoplasm. Its function is as follows. The phosphoenolpyruvate-dependent sugar phosphotransferase system (sugar PTS), a major carbohydrate active transport system, catalyzes the phosphorylation of incoming sugar substrates concomitantly with their translocation across the cell membrane. The enzyme II complex composed of PtsG and Crr is involved in glucose transport. This is PTS system glucose-specific EIIA component (crr) from Bacillus cereus (strain ATCC 14579 / DSM 31 / CCUG 7414 / JCM 2152 / NBRC 15305 / NCIMB 9373 / NCTC 2599 / NRRL B-3711).